The primary structure comprises 277 residues: Digeranylgeranylglyceryl phosphate synthase (277 aa).

7 consecutive transmembrane segments (helical) span residues 16–36 (ILAGVVGILGSLVAYEGIPSI), 40–60 (GLVFLVVYLGCSAGNTINDYF), 101–121 (FLGVEALLFALGAYALTFIYA), 129–149 (FIGNVAVALLTAATPIYGALG), 153–173 (VGLAGYLAICAFLVNVSREIM), 205–225 (IFGVLTVITSFLPVKVGIGLG), and 257–277 (LKIATFIAVISFLLGALTKGV).

It belongs to the UbiA prenyltransferase family. DGGGP synthase subfamily. The cofactor is Mg(2+).

It localises to the cell membrane. The enzyme catalyses sn-3-O-(geranylgeranyl)glycerol 1-phosphate + (2E,6E,10E)-geranylgeranyl diphosphate = 2,3-bis-O-(geranylgeranyl)-sn-glycerol 1-phosphate + diphosphate. It participates in membrane lipid metabolism; glycerophospholipid metabolism. Its function is as follows. Prenyltransferase that catalyzes the transfer of the geranylgeranyl moiety of geranylgeranyl diphosphate (GGPP) to the C2 hydroxyl of (S)-3-O-geranylgeranylglyceryl phosphate (GGGP). This reaction is the second ether-bond-formation step in the biosynthesis of archaeal membrane lipids. The polypeptide is Digeranylgeranylglyceryl phosphate synthase (Pyrococcus abyssi (strain GE5 / Orsay)).